A 224-amino-acid polypeptide reads, in one-letter code: Zinc finger C4H2 domain-containing protein (224 aa).

Positions 11 to 104 (LESIKEIRNK…RRLHDEYKPL (94 aa)) form a coiled coil. Residues 189–206 (CLSCHQQIHRNAPICPLC) form a C4H2-type zinc finger.

As to expression, expressed in fetal tissues, including in brain, intestine, lung, kidney and muscle. Isoform 1 is expressed in numerous fetal brain regions. Isoform 3 is highly expressed in numerous fetal brain regions and spinal cord.

The protein localises to the cytoplasm. Its subcellular location is the nucleus. It is found in the postsynaptic cell membrane. Plays a role in interneurons differentiation. Involved in neuronal development and in neuromuscular junction formation. The chain is Zinc finger C4H2 domain-containing protein (ZC4H2) from Homo sapiens (Human).